Consider the following 46-residue polypeptide: Small polypeptide DEVIL 5 (46 aa).

The chain crosses the membrane as a helical span at residues 8–24 (VGGTKRKMWSRGVGGVV). The segment at 15-46 (MWSRGVGGVVREQKAKLYIIRRCVVMLLCWHD) is required for DVL/RTFL small polypeptide activity.

This sequence belongs to the DVL/RTFL small polypeptides family. In terms of tissue distribution, mostly expressed in roots and flowers, and, to a lower extent, in leaves and stems.

It localises to the cell membrane. Its function is as follows. Small polypeptide acting as a regulatory molecule which coordinates cellular responses required for differentiation, growth and development, including leaves shape, pedicule elongation, inflorescence organization and fruit maturation, probably by restricting polar cell proliferation in lateral organs and coordinating socket cell recruitment and differentiation at trichome sites. The protein is Small polypeptide DEVIL 5 of Arabidopsis thaliana (Mouse-ear cress).